The primary structure comprises 487 residues: Probable aspartic-type endopeptidase opsB (487 aa).

The N-terminal stretch at 1–20 (MQKSWLVLLVACLGLQGTTA) is a signal peptide. Residues 69-398 (YFCNITLGTP…DLSNNEISLA (330 aa)) form the Peptidase A1 domain. The N-linked (GlcNAc...) asparagine glycan is linked to Asn72. The active site involves Asp87. N-linked (GlcNAc...) asparagine glycans are attached at residues Asn99, Asn111, Asn132, and Asn272. Asp286 is an active-site residue. 2 N-linked (GlcNAc...) asparagine glycosylation sites follow: Asn329 and Asn403. The GPI-anchor amidated alanine moiety is linked to residue Ala463. Positions 464-487 (PAGPTDVPKHLVLGAAAIGYVLAF) are cleaved as a propeptide — removed in mature form.

It belongs to the peptidase A1 family.

Its subcellular location is the cell membrane. In terms of biological role, probable GPI-anchored aspartic-type endopeptidase. In Aspergillus oryzae (strain ATCC 42149 / RIB 40) (Yellow koji mold), this protein is Probable aspartic-type endopeptidase opsB (opsB).